Here is a 93-residue protein sequence, read N- to C-terminus: Alpha-defensin 21 (93 aa).

The N-terminal stretch at Met-1–Thr-19 is a signal peptide. Residues Asp-20–Leu-58 constitute a propeptide that is removed on maturation. A disordered region spans residues Ile-22–Ser-43. The segment covering Thr-25 to Gln-40 has biased composition (acidic residues). Cystine bridges form between Cys-64-Cys-89, Cys-66-Cys-81, and Cys-71-Cys-88.

Belongs to the alpha-defensin family.

It is found in the secreted. In terms of biological role, may have microbicidal activities. The chain is Alpha-defensin 21 (Defa21) from Mus musculus (Mouse).